Here is a 60-residue protein sequence, read N- to C-terminus: LKCNKLVPLFYKTCPAGKNLCYKMFMVSNKMVPVKRGCIDVCPKSSLLVKYVCCNTDRCN.

4 disulfides stabilise this stretch: Cys-3-Cys-21, Cys-14-Cys-38, Cys-42-Cys-53, and Cys-54-Cys-59.

This sequence belongs to the three-finger toxin family. Short-chain subfamily. Type IA cytotoxin sub-subfamily. In terms of assembly, monomer in solution; Homodimer and oligomer in the presence of negatively charged lipids forming a pore with a size ranging between 20 and 30 Angstroms. In terms of tissue distribution, expressed by the venom gland.

The protein resides in the secreted. It localises to the target cell membrane. Functionally, basic protein that binds to cell membrane and depolarizes cardiomyocytes. It also possesses lytic activity on many other cells, including red blood cells. Interaction with sulfatides in the cell membrane induces pore formation and cell internalization and is responsible for cytotoxicity in cardiomyocytes. It targets the mitochondrial membrane and induces mitochondrial swelling and fragmentation. Inhibits protein kinases C. It binds to the integrin alpha-V/beta-3 with a moderate affinity. Is cardiotoxic and cytocidal to Yoshida sarcoma cells. This chain is Cytotoxin 5, found in Naja atra (Chinese cobra).